The chain runs to 406 residues: MKRAFILVLDSFGIGAAADAEQFGDVGSDTLGHIADQCEQGLANNDKREGALRLPNLSKLGLAMAHKESTGRFAPGLDADAEIIGAYGHAAELSSGKDTPSGHWEIAGVPVLFDWGYFTDKANSFPKELTDRILERAGLDGFLGNCHASGTQVLDDLGEEHMKTGKPIFYTSADSVFQIACHEETFGLDRLLELCQIAREELEDYNIGRVIARPFVGAGKGQFERTGNRRDLSVEPPSATVLQKLVEEKQGDVVSIGKIADIYANCGITKKVKATGIPALFEATLEQIKEAGDNTIVFTNFVDFDSAYGHRRDVAGYAAALEYFDGRINEVLEIMEEDDVLILTADHGCDPTWPGTDHTREHIPVIVYGKRVPAGSLGRRDSFADIGQTLATYFGTSPMDYGKNFL.

Mn(2+)-binding residues include D10, D305, H310, D346, H347, and H358.

Belongs to the phosphopentomutase family. It depends on Mn(2+) as a cofactor.

The protein resides in the cytoplasm. The enzyme catalyses 2-deoxy-alpha-D-ribose 1-phosphate = 2-deoxy-D-ribose 5-phosphate. It carries out the reaction alpha-D-ribose 1-phosphate = D-ribose 5-phosphate. The protein operates within carbohydrate degradation; 2-deoxy-D-ribose 1-phosphate degradation; D-glyceraldehyde 3-phosphate and acetaldehyde from 2-deoxy-alpha-D-ribose 1-phosphate: step 1/2. Its function is as follows. Isomerase that catalyzes the conversion of deoxy-ribose 1-phosphate (dRib-1-P) and ribose 1-phosphate (Rib-1-P) to deoxy-ribose 5-phosphate (dRib-5-P) and ribose 5-phosphate (Rib-5-P), respectively. This chain is Phosphopentomutase, found in Vibrio campbellii (strain ATCC BAA-1116).